The following is a 215-amino-acid chain: Adenylate kinase (215 aa).

10–15 is a binding site for ATP; sequence GAGKGT. Residues 30-59 are NMP; sequence STGDMLRAAVKAETELGLKAKSVMDSGGLV. Residues Thr-31, Arg-36, 57-59, 85-88, and Gln-92 each bind AMP; these read GLV and GFPR. The LID stretch occupies residues 122-159; it reads GRRVHEGSGRIYHTIFNPPKVECIDDVTGEPLLQRKDD. Residues Arg-123 and 132–133 each bind ATP; that span reads IY. Residues Arg-156 and Arg-167 each contribute to the AMP site. Gly-201 contacts ATP.

It belongs to the adenylate kinase family. As to quaternary structure, monomer.

It localises to the cytoplasm. It catalyses the reaction AMP + ATP = 2 ADP. It participates in purine metabolism; AMP biosynthesis via salvage pathway; AMP from ADP: step 1/1. Functionally, catalyzes the reversible transfer of the terminal phosphate group between ATP and AMP. Plays an important role in cellular energy homeostasis and in adenine nucleotide metabolism. This Pseudomonas savastanoi pv. phaseolicola (strain 1448A / Race 6) (Pseudomonas syringae pv. phaseolicola (strain 1448A / Race 6)) protein is Adenylate kinase.